The sequence spans 664 residues: Glycine--tRNA ligase beta subunit (664 aa).

Belongs to the class-II aminoacyl-tRNA synthetase family. Tetramer of two alpha and two beta subunits.

It localises to the cytoplasm. The catalysed reaction is tRNA(Gly) + glycine + ATP = glycyl-tRNA(Gly) + AMP + diphosphate. The sequence is that of Glycine--tRNA ligase beta subunit from Rickettsia conorii (strain ATCC VR-613 / Malish 7).